A 271-amino-acid chain; its full sequence is Glutamate racemase (271 aa).

Substrate is bound by residues 10 to 11 (DS) and 42 to 43 (YG). Cysteine 73 functions as the Proton donor/acceptor in the catalytic mechanism. 74-75 (NT) contacts substrate. Cysteine 183 (proton donor/acceptor) is an active-site residue. A substrate-binding site is contributed by 184–185 (TH).

The protein belongs to the aspartate/glutamate racemases family.

The catalysed reaction is L-glutamate = D-glutamate. It participates in cell wall biogenesis; peptidoglycan biosynthesis. Provides the (R)-glutamate required for cell wall biosynthesis. The sequence is that of Glutamate racemase from Lactococcus lactis subsp. cremoris (strain MG1363).